The sequence spans 253 residues: MADAPYKLILLRHGESEWNAKNLFTGWVDVNLTEKGEKEAVRGGELLKDAGLLPDVLHTSLQRRAIRTAQLALESADRLWIPVRRSWRLNERHYGALQGKDKAQTLAEFGEEQFMLWRRSYDTPPPPLARDDEFSQFDDPRYATLPPEVRPDTECLKDVVVRMLPYWFDSIVPDLLTGRTVLVAAHGNSLRGLVKHLDGISDEDISGLNIPTGIPLSYELDADFKPLKPGGTYLDPDAAKAAIEAVKNQGKKK.

Substrate is bound by residues 12 to 19, 25 to 26, Arg-64, 91 to 94, Lys-102, 118 to 119, and 187 to 188; these read RHGESEWN, TG, ERHY, RR, and GN. Residue His-13 is the Tele-phosphohistidine intermediate of the active site. Glu-91 acts as the Proton donor/acceptor in catalysis.

It belongs to the phosphoglycerate mutase family. BPG-dependent PGAM subfamily.

It catalyses the reaction (2R)-2-phosphoglycerate = (2R)-3-phosphoglycerate. It functions in the pathway carbohydrate degradation; glycolysis; pyruvate from D-glyceraldehyde 3-phosphate: step 3/5. In terms of biological role, catalyzes the interconversion of 2-phosphoglycerate and 3-phosphoglycerate. The polypeptide is 2,3-bisphosphoglycerate-dependent phosphoglycerate mutase (Streptomyces griseus subsp. griseus (strain JCM 4626 / CBS 651.72 / NBRC 13350 / KCC S-0626 / ISP 5235)).